A 158-amino-acid polypeptide reads, in one-letter code: SsrA-binding protein (158 aa).

Residues 133–152 are compositionally biased toward basic and acidic residues; that stretch reads KRQTLREQQDNREAQREMRE. The interval 133-158 is disordered; sequence KRQTLREQQDNREAQREMRERNRRRG.

The protein belongs to the SmpB family.

It is found in the cytoplasm. Its function is as follows. Required for rescue of stalled ribosomes mediated by trans-translation. Binds to transfer-messenger RNA (tmRNA), required for stable association of tmRNA with ribosomes. tmRNA and SmpB together mimic tRNA shape, replacing the anticodon stem-loop with SmpB. tmRNA is encoded by the ssrA gene; the 2 termini fold to resemble tRNA(Ala) and it encodes a 'tag peptide', a short internal open reading frame. During trans-translation Ala-aminoacylated tmRNA acts like a tRNA, entering the A-site of stalled ribosomes, displacing the stalled mRNA. The ribosome then switches to translate the ORF on the tmRNA; the nascent peptide is terminated with the 'tag peptide' encoded by the tmRNA and targeted for degradation. The ribosome is freed to recommence translation, which seems to be the essential function of trans-translation. This Pseudarthrobacter chlorophenolicus (strain ATCC 700700 / DSM 12829 / CIP 107037 / JCM 12360 / KCTC 9906 / NCIMB 13794 / A6) (Arthrobacter chlorophenolicus) protein is SsrA-binding protein.